Reading from the N-terminus, the 393-residue chain is Methylthioribose kinase (393 aa).

ATP-binding positions include Asn-38, Lys-53, and 107 to 109 (EDL). Substrate is bound at residue Asp-225. 242-244 (DPE) lines the ATP pocket. Arg-332 is a binding site for substrate.

Belongs to the methylthioribose kinase family. Homodimer.

The enzyme catalyses 5-(methylsulfanyl)-D-ribose + ATP = 5-(methylsulfanyl)-alpha-D-ribose 1-phosphate + ADP + H(+). It functions in the pathway amino-acid biosynthesis; L-methionine biosynthesis via salvage pathway; S-methyl-5-thio-alpha-D-ribose 1-phosphate from S-methyl-5'-thioadenosine (hydrolase route): step 2/2. Its function is as follows. Catalyzes the phosphorylation of methylthioribose into methylthioribose-1-phosphate. This chain is Methylthioribose kinase, found in Bacillus cereus (strain G9842).